Consider the following 1148-residue polypeptide: Ice nucleation protein (1148 aa).

3 disordered regions span residues 110 to 131, 222 to 256, and 367 to 394; these read ADPASTSTSTSTSTLTPMPTAI, YGSTQTSGEDSSLTAGYGSTQTAQEGSNLTAGYGS, and GSTQTSGSDSSLTAGYGSTQTAQEGSNL. Over residues 114–128 the composition is skewed to low complexity; the sequence is STSTSTSTSTLTPMP. Residues 180-1099 form an octapeptide periodicity region; it reads ATYGSTLSGD…LSAGEDSTLI (920 aa). Residues 230-250 show a composition bias toward polar residues; the sequence is EDSSLTAGYGSTQTAQEGSNL.

This sequence belongs to the bacterial ice nucleation protein family.

Its subcellular location is the cell outer membrane. In terms of biological role, ice nucleation proteins enable bacteria to nucleate crystallization in supercooled water. The protein is Ice nucleation protein (inaK) of Pseudomonas syringae.